Reading from the N-terminus, the 220-residue chain is Probable septum site-determining protein MinC (220 aa).

It belongs to the MinC family. Interacts with MinD and FtsZ.

Its function is as follows. Cell division inhibitor that blocks the formation of polar Z ring septums. Rapidly oscillates between the poles of the cell to destabilize FtsZ filaments that have formed before they mature into polar Z rings. Prevents FtsZ polymerization. The chain is Probable septum site-determining protein MinC from Vibrio parahaemolyticus serotype O3:K6 (strain RIMD 2210633).